The following is a 486-amino-acid chain: CUGBP Elav-like family member 5 (486 aa).

Basic and acidic residues predominate over residues 1–11; that stretch reads MARLTEREARR. The tract at residues 1–39 is disordered; it reads MARLTEREARRQQQQHPPQQQQPRACPMSGPEPPAQQSD. Residues 12–24 are compositionally biased toward low complexity; sequence QQQQHPPQQQQPR. 3 RRM domains span residues 47–128, 135–215, and 401–479; these read IKLF…PADS, RKLF…FADT, and CNLF…LKRP.

Belongs to the CELF/BRUNOL family.

It is found in the nucleus. The protein resides in the cytoplasm. In terms of biological role, RNA-binding protein that may be implicated in the regulation of pre-mRNA alternative splicing. This chain is CUGBP Elav-like family member 5 (celf5), found in Xenopus tropicalis (Western clawed frog).